Here is a 161-residue protein sequence, read N- to C-terminus: SsrA-binding protein (161 aa).

Belongs to the SmpB family.

The protein resides in the cytoplasm. Its function is as follows. Required for rescue of stalled ribosomes mediated by trans-translation. Binds to transfer-messenger RNA (tmRNA), required for stable association of tmRNA with ribosomes. tmRNA and SmpB together mimic tRNA shape, replacing the anticodon stem-loop with SmpB. tmRNA is encoded by the ssrA gene; the 2 termini fold to resemble tRNA(Ala) and it encodes a 'tag peptide', a short internal open reading frame. During trans-translation Ala-aminoacylated tmRNA acts like a tRNA, entering the A-site of stalled ribosomes, displacing the stalled mRNA. The ribosome then switches to translate the ORF on the tmRNA; the nascent peptide is terminated with the 'tag peptide' encoded by the tmRNA and targeted for degradation. The ribosome is freed to recommence translation, which seems to be the essential function of trans-translation. The sequence is that of SsrA-binding protein from Vibrio parahaemolyticus serotype O3:K6 (strain RIMD 2210633).